Here is a 216-residue protein sequence, read N- to C-terminus: Protein shisa-5 (216 aa).

The signal sequence occupies residues Met1–Ser26. The Extracellular segment spans residues Glu27 to Arg93. The chain crosses the membrane as a helical span at residues Phe94–Val114. Residues Cys115–Pro216 lie on the Cytoplasmic side of the membrane.

Belongs to the shisa family. Interacts with PDCD6; PDCD6 can stabilize SHISA5.

It is found in the endoplasmic reticulum membrane. Its subcellular location is the nucleus membrane. Functionally, can induce apoptosis in a caspase-dependent manner and plays a role in p53/TP53-dependent apoptosis. This chain is Protein shisa-5 (SHISA5), found in Bos taurus (Bovine).